The chain runs to 417 residues: Cotranscriptional regulator ARB2A (417 aa).

The signal sequence occupies residues 1-18 (MSISLSSLIFLPIWINMA). An N-linked (GlcNAc...) asparagine glycan is attached at N26. The tract at residues 208 to 248 (KQKMHKQSSSSDGTDEPAGKRERRDKVSKETKKRRDFYEKY) is disordered. A compositionally biased stretch (basic and acidic residues) spans 224–237 (PAGKRERRDKVSKE). S294 functions as the Nucleophile in the catalytic mechanism. Residues 398-417 (SSSQKPALTRRSHRIKHEEL) form a disordered region. Positions 405–417 (LTRRSHRIKHEEL) are enriched in basic residues. A Prevents secretion from ER motif is present at residues 414–417 (HEEL).

It belongs to the ARB2A family. As to quaternary structure, interacts with AGO2. Found in a complex, composed of AGO2, CHD7 and ARB2A.

The protein localises to the nucleus. Its subcellular location is the cytoplasm. It localises to the endoplasmic reticulum. Plays a role in the regulation of alternative splicing, by interacting with AGO2 and CHD7. Seems to be required for stabilizing protein-protein interactions at the chromatin-spliceosome interface. May have hydrolase activity. The sequence is that of Cotranscriptional regulator ARB2A (Arb2a) from Mus musculus (Mouse).